The sequence spans 96 residues: Co-chaperonin GroES (96 aa).

Belongs to the GroES chaperonin family. As to quaternary structure, heptamer of 7 subunits arranged in a ring. Interacts with the chaperonin GroEL.

The protein localises to the cytoplasm. Functionally, together with the chaperonin GroEL, plays an essential role in assisting protein folding. The GroEL-GroES system forms a nano-cage that allows encapsulation of the non-native substrate proteins and provides a physical environment optimized to promote and accelerate protein folding. GroES binds to the apical surface of the GroEL ring, thereby capping the opening of the GroEL channel. The polypeptide is Co-chaperonin GroES (Nitrosospira multiformis (strain ATCC 25196 / NCIMB 11849 / C 71)).